Consider the following 188-residue polypeptide: Adenine phosphoribosyltransferase (188 aa).

This sequence belongs to the purine/pyrimidine phosphoribosyltransferase family. In terms of assembly, homodimer.

The protein resides in the cytoplasm. It catalyses the reaction AMP + diphosphate = 5-phospho-alpha-D-ribose 1-diphosphate + adenine. The protein operates within purine metabolism; AMP biosynthesis via salvage pathway; AMP from adenine: step 1/1. Functionally, catalyzes a salvage reaction resulting in the formation of AMP, that is energically less costly than de novo synthesis. In Frankia casuarinae (strain DSM 45818 / CECT 9043 / HFP020203 / CcI3), this protein is Adenine phosphoribosyltransferase.